Reading from the N-terminus, the 156-residue chain is Small ribosomal subunit protein uS7 (156 aa).

The protein belongs to the universal ribosomal protein uS7 family. In terms of assembly, part of the 30S ribosomal subunit. Contacts proteins S9 and S11.

Functionally, one of the primary rRNA binding proteins, it binds directly to 16S rRNA where it nucleates assembly of the head domain of the 30S subunit. Is located at the subunit interface close to the decoding center, probably blocks exit of the E-site tRNA. This Bacillus cereus (strain G9842) protein is Small ribosomal subunit protein uS7.